A 332-amino-acid polypeptide reads, in one-letter code: Agamous-like MADS-box protein AGL66 (332 aa).

The 61-residue stretch at 1–61 (MGRVKLEIKR…DRLSLFSGKT (61 aa)) folds into the MADS-box domain. A coiled-coil region spans residues 120–151 (TAINSDVEELEHEVYKLQQQLLMAEEELRKYE).

In terms of assembly, forms a heterodimer with AGL30. In terms of tissue distribution, expressed in pollen.

The protein localises to the nucleus. In terms of biological role, probable transcription factor that forms a heterodimer with the MADS-box protein AGL30 and is involved in the regulation of pollen maturation at the late stages of pollen development and pollen tube growth. This Arabidopsis thaliana (Mouse-ear cress) protein is Agamous-like MADS-box protein AGL66.